The following is a 154-amino-acid chain: Secreted RxLR effector protein PITG_21681 (154 aa).

An N-terminal signal peptide occupies residues 1–20 (MRRYAALMVIDAVLLSTSQA). The interval 42–70 (SAERDGGIPNKRSLRRISVTESNDGERDE) is disordered. A RxLR-dEER motif is present at residues 53–72 (RSLRRISVTESNDGERDEER).

The protein belongs to the RxLR effector family.

It is found in the secreted. The protein resides in the host cell. Its function is as follows. Secreted effector that is involved in host plant infection. Increases the susceptibility to P.infestans and reduces the plant growth. Affects the expression of host genes. The polypeptide is Secreted RxLR effector protein PITG_21681 (Phytophthora infestans (strain T30-4) (Potato late blight agent)).